Reading from the N-terminus, the 294-residue chain is Glycine--tRNA ligase alpha subunit (294 aa).

Belongs to the class-II aminoacyl-tRNA synthetase family. Tetramer of two alpha and two beta subunits.

It is found in the cytoplasm. The catalysed reaction is tRNA(Gly) + glycine + ATP = glycyl-tRNA(Gly) + AMP + diphosphate. The polypeptide is Glycine--tRNA ligase alpha subunit (Polynucleobacter asymbioticus (strain DSM 18221 / CIP 109841 / QLW-P1DMWA-1) (Polynucleobacter necessarius subsp. asymbioticus)).